The sequence spans 105 residues: Small ribosomal subunit protein uS10 (105 aa).

The protein belongs to the universal ribosomal protein uS10 family. As to quaternary structure, part of the 30S ribosomal subunit.

Functionally, involved in the binding of tRNA to the ribosomes. The chain is Small ribosomal subunit protein uS10 from Bdellovibrio bacteriovorus (strain ATCC 15356 / DSM 50701 / NCIMB 9529 / HD100).